The following is a 187-amino-acid chain: Transcriptional repressor NrdR (187 aa).

The segment at 3-34 (CPFCRHPDSRVVDSRTTDDGTSIRRRRQCPDC) is a zinc-finger region. One can recognise an ATP-cone domain in the interval 46–136 (LMVVKRSGVT…VYRAFDSLED (91 aa)). The segment at 146 to 187 (EEQRERPAVDDEDHEDAGAERQGTDRGSGGTVEVPVPATVAD) is disordered.

It belongs to the NrdR family. Requires Zn(2+) as cofactor.

In terms of biological role, negatively regulates transcription of bacterial ribonucleotide reductase nrd genes and operons by binding to NrdR-boxes. The protein is Transcriptional repressor NrdR of Streptomyces avermitilis (strain ATCC 31267 / DSM 46492 / JCM 5070 / NBRC 14893 / NCIMB 12804 / NRRL 8165 / MA-4680).